We begin with the raw amino-acid sequence, 203 residues long: Glycerol-3-phosphate acyltransferase (203 aa).

5 consecutive transmembrane segments (helical) span residues 5–25 (IYIA…GLIL), 55–75 (LAAA…IVAA), 84–104 (IAAN…LFPV), 118–138 (IGVL…MWLA), and 159–179 (IFLW…LTLL).

Belongs to the PlsY family. In terms of assembly, probably interacts with PlsX.

The protein localises to the cell inner membrane. It catalyses the reaction an acyl phosphate + sn-glycerol 3-phosphate = a 1-acyl-sn-glycero-3-phosphate + phosphate. Its pathway is lipid metabolism; phospholipid metabolism. Catalyzes the transfer of an acyl group from acyl-phosphate (acyl-PO(4)) to glycerol-3-phosphate (G3P) to form lysophosphatidic acid (LPA). This enzyme utilizes acyl-phosphate as fatty acyl donor, but not acyl-CoA or acyl-ACP. This chain is Glycerol-3-phosphate acyltransferase, found in Rhodopseudomonas palustris (strain ATCC BAA-98 / CGA009).